The following is a 148-amino-acid chain: UPAR/Ly6 domain-containing protein bero (148 aa).

Residues 1–23 (MVSALKCSLAVAVMISLACSAYA) form the signal peptide. Disulfide bonds link Cys26–Cys72, Cys29–Cys37, Cys51–Cys90, Cys102–Cys116, and Cys119–Cys124. N-linked (GlcNAc...) asparagine glycosylation is present at Asn68. Residue Asn125 is glycosylated (N-linked (GlcNAc...) asparagine). The GPI-anchor amidated asparagine moiety is linked to residue Asn125. The propeptide at 126 to 148 (GSSSLAPIAGAILLFFGVARLLA) is removed in mature form. Residues 128–148 (SSLAPIAGAILLFFGVARLLA) traverse the membrane as a helical segment.

Belongs to the quiver family.

It is found in the cell membrane. The protein localises to the membrane. The protein resides in the perikaryon. Its subcellular location is the cell projection. It localises to the neuron projection. In terms of biological role, necessary for the maintenance of persistent fluctuating activities and suppression of acute evoked activities in abdominal leucokinin-producing (ABLK) neurons to negatively regulate neuron excitability involved in nociceptive (perception of pain) behavioral responses. The protein is UPAR/Ly6 domain-containing protein bero of Drosophila melanogaster (Fruit fly).